Consider the following 128-residue polypeptide: 3-aminoacrylate deaminase RutC (128 aa).

It belongs to the RutC family.

It carries out the reaction (Z)-3-aminoacrylate + H2O + H(+) = 3-oxopropanoate + NH4(+). Functionally, involved in pyrimidine catabolism. Catalyzes the deamination of 3-aminoacrylate to malonic semialdehyde, a reaction that can also occur spontaneously. RutC may facilitate the reaction and modulate the metabolic fitness, rather than catalyzing essential functions. The protein is 3-aminoacrylate deaminase RutC of Pantoea ananatis (strain LMG 20103).